The chain runs to 497 residues: Acetyl-coenzyme A carboxylase carboxyl transferase subunit beta, chloroplastic (497 aa).

In terms of domain architecture, CoA carboxyltransferase N-terminal spans 230–497 (LWVQCENCYG…FFPLNQNSIK (268 aa)). Residues Cys234, Cys237, Cys253, and Cys256 each contribute to the Zn(2+) site. The C4-type zinc finger occupies 234 to 256 (CENCYGLNYKKFLKSKMNICEQC).

Belongs to the AccD/PCCB family. In terms of assembly, acetyl-CoA carboxylase is a heterohexamer composed of biotin carboxyl carrier protein, biotin carboxylase and 2 subunits each of ACCase subunit alpha and ACCase plastid-coded subunit beta (accD). It depends on Zn(2+) as a cofactor.

The protein resides in the plastid. It is found in the chloroplast stroma. It catalyses the reaction N(6)-carboxybiotinyl-L-lysyl-[protein] + acetyl-CoA = N(6)-biotinyl-L-lysyl-[protein] + malonyl-CoA. The protein operates within lipid metabolism; malonyl-CoA biosynthesis; malonyl-CoA from acetyl-CoA: step 1/1. Functionally, component of the acetyl coenzyme A carboxylase (ACC) complex. Biotin carboxylase (BC) catalyzes the carboxylation of biotin on its carrier protein (BCCP) and then the CO(2) group is transferred by the transcarboxylase to acetyl-CoA to form malonyl-CoA. In Carica papaya (Papaya), this protein is Acetyl-coenzyme A carboxylase carboxyl transferase subunit beta, chloroplastic.